Here is a 510-residue protein sequence, read N- to C-terminus: Serine carboxypeptidase 1 (510 aa).

A signal peptide spans 1-25 (MARRGRRSLASPAVAIALFVFLAYG). Positions 26–36 (GGGGGGGVCEA) are excised as a propeptide. Intrachain disulfides connect C98-C399, C262-C274, and C297-C366. N154 carries N-linked (GlcNAc...) asparagine glycosylation. S194 is a catalytic residue. A glycan (N-linked (GlcNAc...) asparagine) is linked at N268. Residues 303–362 (IKKVTPANTKLPKSFQHLGTTTKPLAVRTRMHGRAWPLRAPVRAGRVPSWQEFARGSRPS) constitute a propeptide, linker peptide. N-linked (GlcNAc...) asparagine glycosylation occurs at N418. Residues D434 and H487 contribute to the active site. The Microbody targeting signal signature appears at 508–510 (SKL).

It belongs to the peptidase S10 family.

The enzyme catalyses Release of a C-terminal amino acid with broad specificity.. This is Serine carboxypeptidase 1 (CBP1) from Oryza sativa subsp. japonica (Rice).